The chain runs to 187 residues: Dihydrofolate reductase type A10 (187 aa).

A DHFR domain is found at 2–174; the sequence is NISLIFANEL…YSLSIDKFVR (173 aa).

The protein belongs to the dihydrofolate reductase family. Homodimer.

It catalyses the reaction (6S)-5,6,7,8-tetrahydrofolate + NADP(+) = 7,8-dihydrofolate + NADPH + H(+). The protein operates within cofactor biosynthesis; tetrahydrofolate biosynthesis; 5,6,7,8-tetrahydrofolate from 7,8-dihydrofolate: step 1/1. In terms of biological role, key enzyme in folate metabolism. Catalyzes an essential reaction for de novo glycine and purine synthesis, and for DNA precursor synthesis. In Escherichia coli, this protein is Dihydrofolate reductase type A10 (dfrA10).